Here is a 205-residue protein sequence, read N- to C-terminus: Transcription antitermination protein NusB (205 aa).

The protein belongs to the NusB family.

Involved in transcription antitermination. Required for transcription of ribosomal RNA (rRNA) genes. Binds specifically to the boxA antiterminator sequence of the ribosomal RNA (rrn) operons. The protein is Transcription antitermination protein NusB of Acaryochloris marina (strain MBIC 11017).